A 230-amino-acid polypeptide reads, in one-letter code: Large ribosomal subunit protein uL1 (230 aa).

This sequence belongs to the universal ribosomal protein uL1 family. Part of the 50S ribosomal subunit.

Functionally, binds directly to 23S rRNA. The L1 stalk is quite mobile in the ribosome, and is involved in E site tRNA release. Its function is as follows. Protein L1 is also a translational repressor protein, it controls the translation of the L11 operon by binding to its mRNA. The protein is Large ribosomal subunit protein uL1 of Erythrobacter litoralis (strain HTCC2594).